A 297-amino-acid polypeptide reads, in one-letter code: Nucleotide-binding protein Bxeno_A0336 (297 aa).

Residue 8–15 (GISGSGKS) coordinates ATP. 57-60 (DARS) is a binding site for GTP.

This sequence belongs to the RapZ-like family.

In terms of biological role, displays ATPase and GTPase activities. The protein is Nucleotide-binding protein Bxeno_A0336 of Paraburkholderia xenovorans (strain LB400).